Here is a 520-residue protein sequence, read N- to C-terminus: DNA mismatch repair protein MutL (520 aa).

Belongs to the DNA mismatch repair MutL/HexB family.

Functionally, this protein is involved in the repair of mismatches in DNA. It is required for dam-dependent methyl-directed DNA mismatch repair. May act as a 'molecular matchmaker', a protein that promotes the formation of a stable complex between two or more DNA-binding proteins in an ATP-dependent manner without itself being part of a final effector complex. The sequence is that of DNA mismatch repair protein MutL from Persephonella marina (strain DSM 14350 / EX-H1).